The following is a 465-amino-acid chain: Juvenile hormone epoxide hydrolase 2 (465 aa).

Residues 7-27 (ILWIAIVIGLGVLYYEITKEF) form a helical membrane-spanning segment. The active-site Nucleophile is aspartate 224. Tyrosine 370 functions as the Proton donor in the catalytic mechanism. The Proton acceptor role is filled by histidine 427.

The protein belongs to the peptidase S33 family.

It localises to the microsome membrane. The protein resides in the endoplasmic reticulum membrane. It catalyses the reaction cis-stilbene oxide + H2O = (1R,2R)-hydrobenzoin. It carries out the reaction 1-(4-methoxyphenyl)-N-methyl-N-[(3-methyloxetan-3-yl)methyl]methanamine + H2O = 2-{[(4-methoxybenzyl)(methyl)amino]methyl}-2-methylpropane-1,3-diol. In terms of biological role, catalyzes juvenile hormone hydrolysis. This Ctenocephalides felis (Cat flea) protein is Juvenile hormone epoxide hydrolase 2.